A 277-amino-acid chain; its full sequence is Inositol monophosphatase 1 (277 aa).

4 residues coordinate Mg(2+): Glu70, Asp90, Ile92, and Asp93. Glu70 provides a ligand contact to substrate. 92 to 95 contributes to the substrate binding site; it reads IDGT. Thr168 is modified (phosphothreonine). Substrate contacts are provided by residues 194-196, Glu213, and Asp220; that span reads GTA. A Mg(2+)-binding site is contributed by Asp220.

This sequence belongs to the inositol monophosphatase superfamily. As to quaternary structure, homodimer. It depends on Mg(2+) as a cofactor.

It is found in the cytoplasm. The enzyme catalyses a myo-inositol phosphate + H2O = myo-inositol + phosphate. It catalyses the reaction 1D-myo-inositol 1-phosphate + H2O = myo-inositol + phosphate. It carries out the reaction 1D-myo-inositol 2-phosphate + H2O = myo-inositol + phosphate. The catalysed reaction is 1D-myo-inositol 3-phosphate + H2O = myo-inositol + phosphate. The enzyme catalyses 1D-myo-inositol 4-phosphate + H2O = myo-inositol + phosphate. It catalyses the reaction 1D-myo-inositol 5-phosphate + H2O = myo-inositol + phosphate. It carries out the reaction 1D-myo-inositol 6-phosphate + H2O = myo-inositol + phosphate. The catalysed reaction is scyllo-inositol 1-phosphate + H2O = scyllo-inositol + phosphate. The enzyme catalyses alpha-D-galactose 1-phosphate + H2O = D-galactose + phosphate. It catalyses the reaction alpha-D-glucose 1-phosphate + H2O = D-glucose + phosphate. It carries out the reaction D-glucose 6-phosphate + H2O = D-glucose + phosphate. The catalysed reaction is beta-D-fructose 1-phosphate + H2O = D-fructose + phosphate. The enzyme catalyses glycerol 2-phosphate + H2O = glycerol + phosphate. It catalyses the reaction adenosine 2'-phosphate + H2O = adenosine + phosphate. Its pathway is polyol metabolism; myo-inositol biosynthesis; myo-inositol from D-glucose 6-phosphate: step 2/2. With respect to regulation, inhibited by Li(+), Ca(2+) and Mn(2+), but also by Mg(2+) at concentrations above 3 mM. Functionally, phosphatase involved in the dephosphorylation of myo-inositol monophosphate to generate myo-inositol. Is also able to dephosphorylate scyllo-inositol-phosphate, myo-inositol 1,4-diphosphate, scyllo-inositol-1,3-diphosphate and scyllo-inositol-1,4-diphosphate. Also dephosphorylates in vitro other sugar-phosphates including D-galactose-1-phosphate, glucose-1-phosphate, glucose-6-phosphate, fructose-1-phosphate, beta-glycerophosphate and 2'-AMP. Responsible for the provision of inositol required for synthesis of phosphatidylinositol and polyphosphoinositides, and involved in maintaining normal brain function. Has been implicated as the pharmacological target for lithium Li(+) action in brain. In Pongo abelii (Sumatran orangutan), this protein is Inositol monophosphatase 1 (IMPA1).